Reading from the N-terminus, the 848-residue chain is Trimethylamine-N-oxide reductase 1 (848 aa).

The tat-type signal signal peptide spans 1 to 39 (MNNNDLFQASRRRFLAQLGGLTVAGMLGTSLLTPRRATA). Serine 191 serves as a coordination point for Mo-bis(molybdopterin guanine dinucleotide).

The protein belongs to the prokaryotic molybdopterin-containing oxidoreductase family. Mo-bis(molybdopterin guanine dinucleotide) is required as a cofactor. Post-translationally, predicted to be exported by the Tat system. The position of the signal peptide cleavage has not been experimentally proven.

It is found in the periplasm. The enzyme catalyses trimethylamine + 2 Fe(III)-[cytochrome c] + H2O = trimethylamine N-oxide + 2 Fe(II)-[cytochrome c] + 3 H(+). In terms of biological role, reduces trimethylamine-N-oxide (TMAO) into trimethylamine; an anaerobic reaction coupled to energy-yielding reactions. This chain is Trimethylamine-N-oxide reductase 1 (torA), found in Escherichia coli O6:H1 (strain CFT073 / ATCC 700928 / UPEC).